Here is a 33-residue protein sequence, read N- to C-terminus: Brevinin 2AV (33 aa).

C27 and C33 are disulfide-bonded.

As to expression, expressed by the skin glands.

It is found in the secreted. Functionally, has antibacterial activity. The polypeptide is Brevinin 2AV (Rana arvalis (Moor frog)).